We begin with the raw amino-acid sequence, 819 residues long: Probable phosphoenolpyruvate synthase (819 aa).

Residue His441 is the Tele-phosphohistidine intermediate of the active site. Substrate-binding residues include Arg540, Arg587, Glu684, Gly706, Thr707, Asn708, and Asp709. Residue Glu684 participates in Mg(2+) binding. Asp709 contacts Mg(2+). The Proton donor role is filled by Cys756.

This sequence belongs to the PEP-utilizing enzyme family. The cofactor is Mg(2+).

It catalyses the reaction pyruvate + ATP + H2O = phosphoenolpyruvate + AMP + phosphate + 2 H(+). Its pathway is carbohydrate biosynthesis; gluconeogenesis. Functionally, catalyzes the phosphorylation of pyruvate to phosphoenolpyruvate. This chain is Probable phosphoenolpyruvate synthase (ppsA), found in Pyrococcus abyssi (strain GE5 / Orsay).